The following is a 574-amino-acid chain: Actin-binding protein wsp1 (574 aa).

Residues 19–130 (IPKSTNKIIA…KKVLDKGCHP (112 aa)) enclose the WH1 domain. Disordered stretches follow at residues 144–186 (KGSS…ELLN), 221–494 (AGTP…IAEL), and 517–574 (KSRK…DEWD). The span at 149-158 (HAPNNSNIQP) shows a compositional bias: polar residues. Composition is skewed to pro residues over residues 230–240 (PPIPPSIPSSR) and 251–260 (PAPPPIPPPS). Low complexity-rich tracts occupy residues 297-306 (SRVSAAALAA) and 324-335 (KPPIGNGSSNSS). The span at 352 to 368 (PLPPQGRSAPPPPPPRS) shows a compositional bias: pro residues. At S386 the chain carries Phosphoserine. Over residues 415–485 (PPVPTPPSLP…PPPAPAPAPA (71 aa)) the composition is skewed to pro residues. The 20-residue stretch at 499-518 (GRANLMASIRASGGMDLLKS) folds into the WH2 domain. Over residues 521-545 (VSASPSVASTKTSNPPVEAPPSNNL) the composition is skewed to polar residues. Over residues 563–574 (SDEEDEDDDEWD) the composition is skewed to acidic residues.

As to quaternary structure, interacts with vrp1.

Its subcellular location is the cytoplasm. The protein localises to the cytoskeleton. Has a role in regulating actin assembly, so regulating polarized growth. The polypeptide is Actin-binding protein wsp1 (wsp1) (Schizosaccharomyces pombe (strain 972 / ATCC 24843) (Fission yeast)).